Consider the following 243-residue polypeptide: Tryptophan synthase alpha chain (243 aa).

Residues Glu-31 and Asp-42 each act as proton acceptor in the active site.

It belongs to the TrpA family. In terms of assembly, tetramer of two alpha and two beta chains.

It carries out the reaction (1S,2R)-1-C-(indol-3-yl)glycerol 3-phosphate + L-serine = D-glyceraldehyde 3-phosphate + L-tryptophan + H2O. Its pathway is amino-acid biosynthesis; L-tryptophan biosynthesis; L-tryptophan from chorismate: step 5/5. Functionally, the alpha subunit is responsible for the aldol cleavage of indoleglycerol phosphate to indole and glyceraldehyde 3-phosphate. The protein is Tryptophan synthase alpha chain of Staphylococcus haemolyticus (strain JCSC1435).